The following is a 264-amino-acid chain: Ribosomal RNA small subunit methyltransferase J (264 aa).

S-adenosyl-L-methionine contacts are provided by residues 111–112 (RD), 127–128 (ER), and Asp180.

It belongs to the methyltransferase superfamily. RsmJ family.

It localises to the cytoplasm. It catalyses the reaction guanosine(1516) in 16S rRNA + S-adenosyl-L-methionine = N(2)-methylguanosine(1516) in 16S rRNA + S-adenosyl-L-homocysteine + H(+). In terms of biological role, specifically methylates the guanosine in position 1516 of 16S rRNA. The sequence is that of Ribosomal RNA small subunit methyltransferase J from Alkalilimnicola ehrlichii (strain ATCC BAA-1101 / DSM 17681 / MLHE-1).